A 222-amino-acid polypeptide reads, in one-letter code: Thiopurine S-methyltransferase (222 aa).

4 residues coordinate S-adenosyl-L-methionine: Trp10, Leu45, Glu66, and Arg124.

It belongs to the class I-like SAM-binding methyltransferase superfamily. TPMT family.

The protein localises to the cytoplasm. It catalyses the reaction S-adenosyl-L-methionine + a thiopurine = S-adenosyl-L-homocysteine + a thiopurine S-methylether.. The chain is Thiopurine S-methyltransferase from Methylococcus capsulatus (strain ATCC 33009 / NCIMB 11132 / Bath).